The chain runs to 908 residues: Glutamate receptor ionotropic, kainate 2 (908 aa).

A signal peptide spans 1-31; it reads MKIIFPILSNPVFRRTVKLLLCLLWIGYSQG. Residues 32–561 lie on the Extracellular side of the membrane; that stretch reads TTHVLRFGGI…VFSFLNPLSP (530 aa). N-linked (GlcNAc...) asparagine glycans are attached at residues Asn-67, Asn-73, Asn-275, Asn-378, Asn-412, Asn-423, and Asn-430. Cys-96 and Cys-347 form a disulfide bridge. Positions 516, 518, and 523 each coordinate L-glutamate. Asn-546 carries an N-linked (GlcNAc...) asparagine glycan. Residues 562–582 traverse the membrane as a helical segment; the sequence is DIWMYILLAYLGVSCVLFVIA. The Cytoplasmic segment spans residues 583–635; that stretch reads RFSPYEWYNPHPCNPDSDVVENNFTLLNSFWFGVGALMQQGSELMPKALSTRI. Residues 636 to 656 traverse the membrane as a helical segment; the sequence is VGGIWWFFTLIIISSYTANLA. Over 657–819 the chain is Extracellular; that stretch reads AFLTVERMES…KEASALGVQN (163 aa). Ala-689, Thr-690, and Glu-738 together coordinate L-glutamate. A disulfide bond links Cys-750 and Cys-804. N-linked (GlcNAc...) asparagine glycosylation occurs at Asn-751. Residues 820–840 traverse the membrane as a helical segment; sequence IGGIFIVLAAGLVLSVFVAVG. The Cytoplasmic portion of the chain corresponds to 841–908; that stretch reads EFLYKSKKNA…RRLPGKETMA (68 aa). Phosphoserine; by PKC is present on residues Ser-846 and Ser-868. Lys-886 participates in a covalent cross-link: Glycyl lysine isopeptide (Lys-Gly) (interchain with G-Cter in SUMO1).

This sequence belongs to the glutamate-gated ion channel (TC 1.A.10.1) family. GRIK2 subfamily. Homotetramer and heterotetramer with GRIK5. Tetramers may be formed by the dimerization of dimers. Assembles into a kainate-gated homomeric channel that does not bind AMPA. Can form functional heteromeric receptors with GRIK5. Can form functional heteromeric receptors with GRIK3 and GRIK4. Interacts with DLG4. Interacts with NETO2. Interacts (via C-terminus) with KLHL17 (via kelch repeats); the interaction targets GRIK2 for degradation via ubiquitin-proteasome pathway. Post-translationally, sumoylation mediates kainate receptor-mediated endocytosis and regulates synaptic transmission. Sumoylation is enhanced by PIAS3 and desumoylated by SENP1. In terms of processing, ubiquitinated. Ubiquitination regulates the GRIK2 levels at the synapse by leading kainate receptor degradation through proteasome. Phosphorylated by PKC at Ser-868 upon agonist activation, this directly enhance sumoylation. As to expression, expression is higher in cerebellum than in cerebral cortex.

It is found in the cell membrane. It localises to the postsynaptic cell membrane. The catalysed reaction is Ca(2+)(in) = Ca(2+)(out). It carries out the reaction Na(+)(in) = Na(+)(out). With respect to regulation, cold receptor activity activated by temperatures between 10-19 degrees Celsius. Its function is as follows. Ionotropic glutamate receptor that functions as a cation permeable ligand-gated ion channel, gated by L-glutamate and the glutamatergic agonist kainic acid. L-glutamate acts as an excitatory neurotransmitter at many synapses in the central nervous system. Binding of the excitatory neurotransmitter L-glutamate induces a conformation change, leading to the opening of the cation channel, and thereby converts the chemical signal to an electrical impulse. The receptor then desensitizes rapidly and enters a transient inactive state, characterized by the presence of bound agonist. Modulates cell surface expression of NETO2. In association with GRIK3, involved in presynaptic facilitation of glutamate release at hippocampal mossy fiber synapses. Functionally, independent of its ionotropic glutamate receptor activity, acts as a thermoreceptor conferring sensitivity to cold temperatures. Functions in dorsal root ganglion neurons. The polypeptide is Glutamate receptor ionotropic, kainate 2 (GRIK2) (Homo sapiens (Human)).